A 120-amino-acid chain; its full sequence is Large ribosomal subunit protein bL19c (120 aa).

It belongs to the bacterial ribosomal protein bL19 family.

The protein resides in the plastid. It is found in the chloroplast. The chain is Large ribosomal subunit protein bL19c from Thalassiosira weissflogii (Marine diatom).